A 548-amino-acid chain; its full sequence is Chaperonin GroEL (548 aa).

ATP-binding positions include Thr30–Pro33, Lys51, Asp87–Thr91, Gly415, Asn479–Ala481, and Asp495.

It belongs to the chaperonin (HSP60) family. Forms a cylinder of 14 subunits composed of two heptameric rings stacked back-to-back. Interacts with the co-chaperonin GroES.

The protein localises to the cytoplasm. The enzyme catalyses ATP + H2O + a folded polypeptide = ADP + phosphate + an unfolded polypeptide.. In terms of biological role, together with its co-chaperonin GroES, plays an essential role in assisting protein folding. The GroEL-GroES system forms a nano-cage that allows encapsulation of the non-native substrate proteins and provides a physical environment optimized to promote and accelerate protein folding. This is Chaperonin GroEL from Vibrio campbellii (strain ATCC BAA-1116).